A 590-amino-acid chain; its full sequence is Ankyrin repeat-containing protein ITN1 (590 aa).

The interval 25–44 (ENQNPMIDPSPTPSPSATAT) is disordered. 7 ANK repeats span residues 73 to 102 (HNDT…SQME), 128 to 157 (LGET…RESI), 163 to 192 (SGYD…TLSQ), 197 to 226 (SNAT…NLLE), 231 to 260 (NNKN…QLAR), 265 to 294 (KGQT…AIVM), and 299 to 329 (SCNT…NANT). Helical transmembrane passes span 422 to 442 (VTVV…TVPG), 460 to 480 (IFFI…VVQI), 500 to 520 (LMWL…YIVV), and 531 to 551 (VTVV…YYVV).

Interacts with REM19/RTV1. As to expression, expressed in roots, shoots, leaf vasculature and stems.

It is found in the cell membrane. Its function is as follows. Involved in salt stress tolerance. May act through abscisic acid (ABA) signaling pathways and promote reactive oxygen species (ROS) production. The polypeptide is Ankyrin repeat-containing protein ITN1 (Arabidopsis thaliana (Mouse-ear cress)).